The sequence spans 103 residues: Protein translation factor SUI1 homolog (103 aa).

It belongs to the SUI1 family.

This chain is Protein translation factor SUI1 homolog, found in Hyperthermus butylicus (strain DSM 5456 / JCM 9403 / PLM1-5).